Here is a 367-residue protein sequence, read N- to C-terminus: Alanine racemase (367 aa).

The active-site Proton acceptor; specific for D-alanine is the lysine 40. Lysine 40 is subject to N6-(pyridoxal phosphate)lysine. Residue arginine 136 coordinates substrate. Residue tyrosine 263 is the Proton acceptor; specific for L-alanine of the active site. Methionine 310 contributes to the substrate binding site.

Belongs to the alanine racemase family. Pyridoxal 5'-phosphate is required as a cofactor.

The enzyme catalyses L-alanine = D-alanine. It functions in the pathway amino-acid biosynthesis; D-alanine biosynthesis; D-alanine from L-alanine: step 1/1. Its function is as follows. Catalyzes the interconversion of L-alanine and D-alanine. May also act on other amino acids. This Lactococcus lactis subsp. lactis (strain IL1403) (Streptococcus lactis) protein is Alanine racemase (alr).